The primary structure comprises 205 residues: Glycerol-3-phosphate acyltransferase (205 aa).

The Periplasmic segment spans residues 1-3; that stretch reads MSA. Residues 4–24 form a helical membrane-spanning segment; sequence IAPGMILFAYLCGSISSAILV. Residues 25 to 52 are Cytoplasmic-facing; that stretch reads CRLCGLPDPRTSGSGNPGATNVLRMGGK. The chain crosses the membrane as a helical span at residues 53–73; the sequence is GAALAVLIFDVLKGMLPVWGA. Residues 74 to 80 are Periplasmic-facing; sequence YELGVSP. The helical transmembrane segment at 81-101 threads the bilayer; it reads FWLGLIAIAACLGHIWPIFFG. The Cytoplasmic segment spans residues 102–111; that stretch reads FKGGKGVATA. The chain crosses the membrane as a helical span at residues 112–132; sequence FGAIAPIGWDLTGVMAGTWLL. Over 133-137 the chain is Periplasmic; sequence TVLLS. A helical membrane pass occupies residues 138 to 158; it reads GYSSLGAIVSALIAPFYVWWF. Residues 159 to 205 are Cytoplasmic-facing; that stretch reads KPQFTFPVSMLSCLILLRHHDNIQRLWRRQETKIWTKLKRKREKDPE.

The protein belongs to the PlsY family. As to quaternary structure, probably interacts with PlsX.

Its subcellular location is the cell inner membrane. It catalyses the reaction sn-glycerol 3-phosphate + an acyl-CoA = a 1-acyl-sn-glycero-3-phosphate + CoA. The catalysed reaction is a fatty acyl-[ACP] + sn-glycerol 3-phosphate = a 1-acyl-sn-glycero-3-phosphate + holo-[ACP]. It participates in lipid metabolism; phospholipid metabolism. Catalyzes the transfer of an acyl group from acyl-ACP to glycerol-3-phosphate (G3P) to form lysophosphatidic acid (LPA). This enzyme can also utilize acyl-CoA as fatty acyl donor, but not acyl-PO(4). This Escherichia fergusonii (strain ATCC 35469 / DSM 13698 / CCUG 18766 / IAM 14443 / JCM 21226 / LMG 7866 / NBRC 102419 / NCTC 12128 / CDC 0568-73) protein is Glycerol-3-phosphate acyltransferase.